We begin with the raw amino-acid sequence, 315 residues long: tRNA dimethylallyltransferase (315 aa).

An ATP-binding site is contributed by 13 to 20; sequence GPTASGKS. Residue 15–20 participates in substrate binding; it reads TASGKS. 2 interaction with substrate tRNA regions span residues 38-41 and 162-166; these read DSMQ and QRLAR.

Belongs to the IPP transferase family. As to quaternary structure, monomer. The cofactor is Mg(2+).

It carries out the reaction adenosine(37) in tRNA + dimethylallyl diphosphate = N(6)-dimethylallyladenosine(37) in tRNA + diphosphate. Functionally, catalyzes the transfer of a dimethylallyl group onto the adenine at position 37 in tRNAs that read codons beginning with uridine, leading to the formation of N6-(dimethylallyl)adenosine (i(6)A). The sequence is that of tRNA dimethylallyltransferase from Paramagnetospirillum magneticum (strain ATCC 700264 / AMB-1) (Magnetospirillum magneticum).